Here is a 391-residue protein sequence, read N- to C-terminus: Apolipoprotein A-IV (391 aa).

The N-terminal stretch at 1–20 is a signal peptide; it reads MFLKAVVLTVALVAITGTQA. 13 consecutive repeat copies span residues 33 to 54, 60 to 81, 82 to 103, 115 to 136, 137 to 158, 159 to 180, 181 to 202, 203 to 224, 225 to 246, 247 to 268, 269 to 286, 287 to 308, and 309 to 330. The interval 33 to 330 is 13 X 22 AA approximate tandem repeats; sequence DYFTQLSNNA…QMEKFRQQLG (298 aa). Ser-333 carries the phosphoserine modification. Positions 354–391 are disordered; sequence FMSTLQKKGSPDQPLALPLPEQVQEQVQEQVQPKPLES. Positions 371–391 are enriched in low complexity; it reads PLPEQVQEQVQEQVQPKPLES.

It belongs to the apolipoprotein A1/A4/E family. As to quaternary structure, homodimer. In terms of tissue distribution, secreted in plasma.

The protein resides in the secreted. In terms of biological role, may have a role in chylomicrons and VLDL secretion and catabolism. Required for efficient activation of lipoprotein lipase by ApoC-II; potent activator of LCAT. Apoa-IV is a major component of HDL and chylomicrons. The chain is Apolipoprotein A-IV (Apoa4) from Rattus norvegicus (Rat).